The primary structure comprises 132 residues: Large ribosomal subunit protein uL14 (132 aa).

Belongs to the universal ribosomal protein uL14 family. In terms of assembly, part of the 50S ribosomal subunit. Forms a cluster with proteins L3 and L24e, part of which may contact the 16S rRNA in 2 intersubunit bridges.

Binds to 23S rRNA. Forms part of two intersubunit bridges in the 70S ribosome. This chain is Large ribosomal subunit protein uL14, found in Thermoplasma acidophilum (strain ATCC 25905 / DSM 1728 / JCM 9062 / NBRC 15155 / AMRC-C165).